The chain runs to 407 residues: Phosphonoacetate hydrolase (407 aa).

The Zn(2+) site is built by Asp-25, Thr-64, Asp-202, His-206, Asp-241, His-242, and His-368. Substrate contacts are provided by Thr-64 and Asp-202. Residues His-242 and His-368 each contribute to the substrate site.

It belongs to the alkaline phosphatase family. PhnA subfamily. As to quaternary structure, homodimer. The cofactor is Zn(2+).

It catalyses the reaction phosphonoacetate + H2O = acetate + phosphate + H(+). In terms of biological role, specifically hydrolyzes phosphonoacetate. Does not have activity on other organophosphonates or acetates. In Pseudomonas putida (Arthrobacter siderocapsulatus), this protein is Phosphonoacetate hydrolase.